Consider the following 198-residue polypeptide: Carnitine operon protein CaiE (198 aa).

Residues 174 to 198 (KPLTQAEENRPRLKGTTDVKPKSAQ) are disordered. Basic and acidic residues predominate over residues 180–198 (EENRPRLKGTTDVKPKSAQ).

It belongs to the transferase hexapeptide repeat family.

The protein operates within amine and polyamine metabolism; carnitine metabolism. In terms of biological role, overproduction of CaiE stimulates the activity of CaiB and CaiD. This is Carnitine operon protein CaiE from Salmonella typhimurium (strain LT2 / SGSC1412 / ATCC 700720).